The primary structure comprises 119 residues: Ribonuclease P protein component (119 aa).

Belongs to the RnpA family. In terms of assembly, consists of a catalytic RNA component (M1 or rnpB) and a protein subunit.

It catalyses the reaction Endonucleolytic cleavage of RNA, removing 5'-extranucleotides from tRNA precursor.. Its function is as follows. RNaseP catalyzes the removal of the 5'-leader sequence from pre-tRNA to produce the mature 5'-terminus. It can also cleave other RNA substrates such as 4.5S RNA. The protein component plays an auxiliary but essential role in vivo by binding to the 5'-leader sequence and broadening the substrate specificity of the ribozyme. The polypeptide is Ribonuclease P protein component (Borreliella burgdorferi (strain ZS7) (Borrelia burgdorferi)).